Consider the following 969-residue polypeptide: Alpha-glucosidase (969 aa).

The first 24 residues, Met-1–Gly-24, serve as a signal peptide directing secretion. Residues Asn-37, Asn-67, Asn-99, Asn-116, Asn-139, Asn-146, Asn-209, Asn-245, Asn-249, Asn-331, Asn-406, Asn-429, Asn-462, and Asn-470 are each glycosylated (N-linked (GlcNAc...) asparagine). The active-site Nucleophile is the Asp-481. Residue Glu-484 is part of the active site. N-linked (GlcNAc...) asparagine glycosylation is found at Asn-520, Asn-523, and Asn-589. The active-site Proton donor is the Asp-647. Residues Asn-648, Asn-801, Asn-810, Asn-821, Asn-885, Asn-915, Asn-934, Asn-942, Asn-954, and Asn-966 are each glycosylated (N-linked (GlcNAc...) asparagine).

The protein belongs to the glycosyl hydrolase 31 family.

Its subcellular location is the secreted. It catalyses the reaction Hydrolysis of terminal, non-reducing (1-&gt;4)-linked alpha-D-glucose residues with release of alpha-D-glucose.. In terms of biological role, hydrolyzes malto-oligosaccharides, but has a low activity toward soluble starch. The sequence is that of Alpha-glucosidase (agl1) from Schizosaccharomyces pombe (strain 972 / ATCC 24843) (Fission yeast).